A 262-amino-acid polypeptide reads, in one-letter code: 5-methyltetrahydrofolate:corrinoid/iron-sulfur protein co-methyltransferase (262 aa).

In terms of domain architecture, Pterin-binding spans 1–246 (MLIIGERING…ETAATAEILL (246 aa)). Positions 96 and 160 each coordinate (6S)-5-methyl-5,6,7,8-tetrahydrofolate. Position 184 (lysine 184) interacts with Ca(2+). (6S)-5-methyl-5,6,7,8-tetrahydrofolate contacts are provided by asparagine 199, glutamine 202, and arginine 207. Position 202 to 203 (202 to 203 (QN)) interacts with methylcob(III)alamin. Positions 222 and 224 each coordinate Ca(2+).

Belongs to the vitamin-B12 dependent methionine synthase family. Heterohexamer composed of 2 subunits of AcsC, 2 subunits of AcsD and 2 subunits of AcsE. Ca(2+) is required as a cofactor.

The enzyme catalyses methyl-Co(III)-[corrinoid Fe-S protein] + (6S)-5,6,7,8-tetrahydrofolate = Co(I)-[corrinoid Fe-S protein] + (6S)-5-methyl-5,6,7,8-tetrahydrofolate + H(+). In terms of biological role, methyltransferase that mediates the transfer of a N5-methyl group of (6S)-methyltetrahydrofolate to the 5-methoxybenzimidazolylcobamide cofactor of a corrinoid/Fe-S protein (AcsC/AcsD) in the anaerobic acetyl-CoA pathway (Wood-Ljungdahl pathway) of carbon monoxide and carbon dioxide fixation. The protein is 5-methyltetrahydrofolate:corrinoid/iron-sulfur protein co-methyltransferase (acsE) of Moorella thermoacetica (Clostridium thermoaceticum).